A 244-amino-acid chain; its full sequence is 1-(5-phosphoribosyl)-5-[(5-phosphoribosylamino)methylideneamino] imidazole-4-carboxamide isomerase (244 aa).

The active-site Proton acceptor is aspartate 15. Aspartate 136 functions as the Proton donor in the catalytic mechanism.

It belongs to the HisA/HisF family.

It localises to the cytoplasm. The enzyme catalyses 1-(5-phospho-beta-D-ribosyl)-5-[(5-phospho-beta-D-ribosylamino)methylideneamino]imidazole-4-carboxamide = 5-[(5-phospho-1-deoxy-D-ribulos-1-ylimino)methylamino]-1-(5-phospho-beta-D-ribosyl)imidazole-4-carboxamide. It participates in amino-acid biosynthesis; L-histidine biosynthesis; L-histidine from 5-phospho-alpha-D-ribose 1-diphosphate: step 4/9. This Dehalococcoides mccartyi (strain CBDB1) protein is 1-(5-phosphoribosyl)-5-[(5-phosphoribosylamino)methylideneamino] imidazole-4-carboxamide isomerase.